The sequence spans 276 residues: Release factor glutamine methyltransferase (276 aa).

S-adenosyl-L-methionine-binding positions include 117 to 121, aspartate 140, tryptophan 168, and asparagine 182; that span reads GTGTG. Substrate is bound at residue 182–185; sequence NPPY.

Belongs to the protein N5-glutamine methyltransferase family. PrmC subfamily.

It catalyses the reaction L-glutaminyl-[peptide chain release factor] + S-adenosyl-L-methionine = N(5)-methyl-L-glutaminyl-[peptide chain release factor] + S-adenosyl-L-homocysteine + H(+). Functionally, methylates the class 1 translation termination release factors RF1/PrfA and RF2/PrfB on the glutamine residue of the universally conserved GGQ motif. The sequence is that of Release factor glutamine methyltransferase from Yersinia pestis.